Here is a 250-residue protein sequence, read N- to C-terminus: NH(3)-dependent NAD(+) synthetase (250 aa).

Glycine 31–serine 38 provides a ligand contact to ATP. Position 37 (aspartate 37) interacts with Mg(2+). Deamido-NAD(+) is bound at residue arginine 122. Residue threonine 142 coordinates ATP. Glutamate 147 is a binding site for Mg(2+). 2 residues coordinate deamido-NAD(+): lysine 155 and aspartate 162. 2 residues coordinate ATP: lysine 171 and serine 193. Histidine 239–lysine 240 serves as a coordination point for deamido-NAD(+).

It belongs to the NAD synthetase family. In terms of assembly, homodimer.

It carries out the reaction deamido-NAD(+) + NH4(+) + ATP = AMP + diphosphate + NAD(+) + H(+). It functions in the pathway cofactor biosynthesis; NAD(+) biosynthesis; NAD(+) from deamido-NAD(+) (ammonia route): step 1/1. Catalyzes the ATP-dependent amidation of deamido-NAD to form NAD. Uses ammonia as a nitrogen source. This is NH(3)-dependent NAD(+) synthetase from Alkaliphilus oremlandii (strain OhILAs) (Clostridium oremlandii (strain OhILAs)).